The primary structure comprises 504 residues: 5-epiaristolochene 1,3-dihydroxylase (504 aa).

The helical transmembrane segment at 2 to 22 (QFFSLVSIFLFLSFLFLLRKW) threads the bilayer. C442 contacts heme.

Belongs to the cytochrome P450 family. The cofactor is heme.

It localises to the membrane. It catalyses the reaction (+)-5-epi-aristolochene + 2 reduced [NADPH--hemoprotein reductase] + 2 O2 = capsidiol + 2 oxidized [NADPH--hemoprotein reductase] + 2 H2O + 2 H(+). Inhibited by ancymidol and ketoconazole. Involved in the biosynthesis of capsidiol. Catalyzes the successive and independent hydroxylations at the C1 and C3 positions of 5-epiaristolochene. The second hydroxylation step is 8-fold more efficient than the first hydroxylation reaction. Capable of utilizing premnaspirodiene as a substrate. This chain is 5-epiaristolochene 1,3-dihydroxylase (CYP71D20), found in Nicotiana tabacum (Common tobacco).